The primary structure comprises 234 residues: C2H2-type zinc-finger transcription factor clz7 (234 aa).

Disordered stretches follow at residues 45-99 (RPEG…SRVD) and 118-154 (SAQPDFEDWGDLGDLMPEVLPESSGTSSGAATDNGTA). Low complexity-rich tracts occupy residues 66–77 (SQSSNTSPTSES) and 140–154 (SSGTSSGAATDNGTA). Residues 159–184 (NRCWDHGCNGKKFLNHSNLVRHRREN) form a C2H2-type 1; degenerate zinc finger. A C2H2-type 2; degenerate zinc finger spans residues 191–223 (FICPMCGAYFSRSTARNQHLEKKSCNRVRRYSN).

It belongs to the GLI C2H2-type zinc-finger protein family.

The protein resides in the nucleus. Transcription factor that probably regulates the expression of the gene cluster that mediates the biosynthesis of squalestatin S1 (SQS1, also known as zaragozic acid A), a heavily oxidized fungal polyketide that offers potent cholesterol lowering activity by targeting squalene synthase (SS). The sequence is that of C2H2-type zinc-finger transcription factor clz7 from Cochliobolus lunatus (Filamentous fungus).